A 274-amino-acid polypeptide reads, in one-letter code: Large ribosomal subunit protein uL2 (274 aa).

The tract at residues 223-258 is disordered; the sequence is VAMNPVDHPHGGGEGRTSGGRHPVTPWGIPTKGYKT.

This sequence belongs to the universal ribosomal protein uL2 family. Part of the 50S ribosomal subunit. Forms a bridge to the 30S subunit in the 70S ribosome.

In terms of biological role, one of the primary rRNA binding proteins. Required for association of the 30S and 50S subunits to form the 70S ribosome, for tRNA binding and peptide bond formation. It has been suggested to have peptidyltransferase activity; this is somewhat controversial. Makes several contacts with the 16S rRNA in the 70S ribosome. The polypeptide is Large ribosomal subunit protein uL2 (Pelobacter propionicus (strain DSM 2379 / NBRC 103807 / OttBd1)).